Consider the following 276-residue polypeptide: Ribosomal RNA small subunit methyltransferase A (276 aa).

Positions 27, 29, 54, 75, 101, and 122 each coordinate S-adenosyl-L-methionine.

This sequence belongs to the class I-like SAM-binding methyltransferase superfamily. rRNA adenine N(6)-methyltransferase family. RsmA subfamily.

The protein resides in the cytoplasm. It catalyses the reaction adenosine(1518)/adenosine(1519) in 16S rRNA + 4 S-adenosyl-L-methionine = N(6)-dimethyladenosine(1518)/N(6)-dimethyladenosine(1519) in 16S rRNA + 4 S-adenosyl-L-homocysteine + 4 H(+). Its function is as follows. Specifically dimethylates two adjacent adenosines (A1518 and A1519) in the loop of a conserved hairpin near the 3'-end of 16S rRNA in the 30S particle. May play a critical role in biogenesis of 30S subunits. The polypeptide is Ribosomal RNA small subunit methyltransferase A (Brucella abortus biovar 1 (strain 9-941)).